Reading from the N-terminus, the 347-residue chain is GMP reductase (347 aa).

108–131 (ADFEKTKQILAQSPALNFVCIDVA) provides a ligand contact to NADP(+). Gly181 and Gly183 together coordinate K(+). Catalysis depends on Cys186, which acts as the Thioimidate intermediate. Residue 216 to 239 (IVSDGGCTMPGDVAKAFGGGADFV) coordinates NADP(+).

Belongs to the IMPDH/GMPR family. GuaC type 1 subfamily. As to quaternary structure, homotetramer.

It catalyses the reaction IMP + NH4(+) + NADP(+) = GMP + NADPH + 2 H(+). Catalyzes the irreversible NADPH-dependent deamination of GMP to IMP. It functions in the conversion of nucleobase, nucleoside and nucleotide derivatives of G to A nucleotides, and in maintaining the intracellular balance of A and G nucleotides. This is GMP reductase from Citrobacter koseri (strain ATCC BAA-895 / CDC 4225-83 / SGSC4696).